A 388-amino-acid chain; its full sequence is Chalcone synthase D (388 aa).

Residue Cys164 is part of the active site.

Belongs to the thiolase-like superfamily. Chalcone/stilbene synthases family.

The enzyme catalyses (E)-4-coumaroyl-CoA + 3 malonyl-CoA + 3 H(+) = 2',4,4',6'-tetrahydroxychalcone + 3 CO2 + 4 CoA. It functions in the pathway secondary metabolite biosynthesis; flavonoid biosynthesis. Functionally, the primary product of this enzyme is 4,2',4',6'-tetrahydroxychalcone (also termed naringenin-chalcone or chalcone) which can under specific conditions spontaneously isomerize into naringenin. This is Chalcone synthase D (CHSD) from Ipomoea nil (Japanese morning glory).